Consider the following 611-residue polypeptide: Fatty acid photodecarboxylase, chloroplastic (611 aa).

A disordered region spans residues 1 to 22 (MMLGPKTVTRGATKGAAPRSMA). The transit peptide at 1-36 (MMLGPKTVTRGATKGAAPRSMAARRVGGARRLSVRA) directs the protein to the chloroplast. FAD contacts are provided by residues 55-56 (TA), glutamate 76, methionine 125, serine 129, and 133-136 (NATL). The hexadecanoate site is built by cysteine 392, arginine 412, tyrosine 427, and glutamine 447. Glycine 582 contributes to the FAD binding site.

This sequence belongs to the GMC oxidoreductase family. FAD serves as cofactor.

Its subcellular location is the plastid. The protein resides in the chloroplast. It catalyses the reaction a long-chain fatty acid + hnu + H(+) = a long-chain alkane + CO2. It carries out the reaction hnu + hexadecanoate + H(+) = pentadecane + CO2. With respect to regulation, activated by blue light and repressed by red light. Catalyzes the decarboxylation of free fatty acids to n-alkanes or n-alkenes in response to blue light. Substrate preference is toward fatty acids with C17 or C18 chains. Saturated fatty acids are converted to alkanes, not alkenes. The decarboxylation is initiated through electron abstraction from the fatty acid by the photo-excited FAD. The protein is Fatty acid photodecarboxylase, chloroplastic of Chlamydomonas reinhardtii (Chlamydomonas smithii).